The following is a 235-amino-acid chain: Protein GMH1 homolog (235 aa).

Residues 1-54 (MSRSFRNGFRLLKLSQMDFERAWWDMANLFRAPRRVYRSITLRKQNINRYGRED) are Cytoplasmic-facing. Residues 55-75 (FSFIVLFSCMIVISALLWALF) form a helical membrane-spanning segment. Residues 76–88 (YMNTPKGYVTTIT) are Lumenal-facing. A helical transmembrane segment spans residues 89 to 109 (FMLFVDFGAVGVIMATMYYFI). Over 110 to 140 (AKRFLMKSNDTILSSTDYQLEWNYCFDVHCN) the chain is Cytoplasmic. Residues 141–161 (SFFPSFVLLYVIQLFLLPVIT) form a helical membrane-spanning segment. At 162–175 (RDNFISLFMGNTLY) the chain is on the lumenal side. A helical membrane pass occupies residues 176–196 (LVALCYYSYLTFIGYQILPFL). The Cytoplasmic portion of the chain corresponds to 197–201 (KNTHA). The chain crosses the membrane as a helical span at residues 202–222 (LLLPIPMFFIMWALSLLGFNV). Residues 223 to 235 (PKHVVDVYFGKSA) are Lumenal-facing.

Belongs to the unc-50 family.

It is found in the endoplasmic reticulum membrane. Has a role in meiosis. The polypeptide is Protein GMH1 homolog (mug16) (Schizosaccharomyces pombe (strain 972 / ATCC 24843) (Fission yeast)).